Here is a 160-residue protein sequence, read N- to C-terminus: Eosinophil cationic protein (160 aa).

Residues 1–27 (MVPKLFTSQICLLLLLGLMGVEGSLHA) form the signal peptide. A required for nearly all of the bactericidal activity; partially involved in LPS-binding and bacterial membrane depolarization region spans residues 28–72 (RPPQFTRAQWFAIQHISLNPPRCTIAMRAINNYRWRCKNQNTFLR). The Proton acceptor role is filled by H42. Cystine bridges form between C50–C110, C64–C123, C82–C138, and C89–C98. Y60 is subject to 3'-nitrotyrosine. A substrate-binding site is contributed by 65 to 69 (KNQNT). 3 N-linked (GlcNAc...) asparagine glycosylation sites follow: N84, N92, and N119. The active-site Proton donor is the H155.

It belongs to the pancreatic ribonuclease family. In terms of assembly, interacts with bacterial lipopolysaccharide (LPS) and lipoteichoic acid (LTA). In vitro interacts with and insert into lipid bilayers composed of dioleoyl phosphatidylcholine and dioleoyl phosphatidylglycerol. In vitro, tends to form amyloid-like aggregates at pH 3, but not at pH 5, nor 7.

The protein localises to the secreted. Cytotoxin and helminthotoxin with low-efficiency ribonuclease activity. Possesses a wide variety of biological activities. Exhibits antibacterial activity, including cytoplasmic membrane depolarization of preferentially Gram-negative, but also Gram-positive strains. Promotes E.coli outer membrane detachment, alteration of the overall cell shape and partial loss of cell content. The polypeptide is Eosinophil cationic protein (RNASE3) (Homo sapiens (Human)).